A 2280-amino-acid chain; its full sequence is Protein Ycf2 (2280 aa).

Residue 1631–1638 (GSIGTGRS) participates in ATP binding.

Belongs to the Ycf2 family.

It localises to the plastid. The protein localises to the chloroplast stroma. In terms of biological role, probable ATPase of unknown function. Its presence in a non-photosynthetic plant (Epifagus virginiana) and experiments in tobacco indicate that it has an essential function which is probably not related to photosynthesis. The chain is Protein Ycf2 (ycf2-A) from Nicotiana tabacum (Common tobacco).